Reading from the N-terminus, the 108-residue chain is UPF0060 membrane protein YnfA (108 aa).

Over 1–5 the chain is Periplasmic; that stretch reads MIKTT. The chain crosses the membrane as a helical span at residues 6–26; it reads LLFFATALCEIIGCFLPWLWL. Topologically, residues 27-30 are cytoplasmic; the sequence is KRNA. Residues 31–51 form a helical membrane-spanning segment; sequence SIWLLLPAGISLALFVWLLTL. At 52–60 the chain is on the periplasmic side; the sequence is HPAASGRVY. A helical transmembrane segment spans residues 61-81; it reads AAYGGVYVCTALIWLRVVDGV. Residues 82 to 84 lie on the Cytoplasmic side of the membrane; sequence KLS. A helical transmembrane segment spans residues 85–105; sequence LYDWTGALIALCGMLIIVAGW. The Periplasmic segment spans residues 106–108; it reads GRT.

The protein belongs to the UPF0060 family.

Its subcellular location is the cell inner membrane. The protein is UPF0060 membrane protein YnfA of Escherichia coli (strain SMS-3-5 / SECEC).